Here is a 612-residue protein sequence, read N- to C-terminus: UvrABC system protein C (612 aa).

A GIY-YIG domain is found at 20-98; sequence THSGVYRMLD…IKQHRPKYNI (79 aa). The UVR domain maps to 208-243; sequence SSVLEEISAKMYQASEDMEYEKAQVYRDQLVVLRKL.

The protein belongs to the UvrC family. In terms of assembly, interacts with UvrB in an incision complex.

Its subcellular location is the cytoplasm. Its function is as follows. The UvrABC repair system catalyzes the recognition and processing of DNA lesions. UvrC both incises the 5' and 3' sides of the lesion. The N-terminal half is responsible for the 3' incision and the C-terminal half is responsible for the 5' incision. This is UvrABC system protein C from Francisella tularensis subsp. tularensis (strain FSC 198).